An 84-amino-acid chain; its full sequence is Tenecin-1 (84 aa).

The N-terminal stretch at 1–19 (MKLTIFALVACFFILQIAA) is a signal peptide. Positions 20 to 41 (FPLEEAATAEEIEQGEHIRVKR) are excised as a propeptide. 3 disulfide bridges follow: cysteine 44–cysteine 75, cysteine 61–cysteine 81, and cysteine 65–cysteine 83.

It belongs to the invertebrate defensin family. Type 1 subfamily.

It localises to the secreted. Bactericidal protein produced in response to injury. It is cytotoxic to Gram-positive bacteria. This Tenebrio molitor (Yellow mealworm beetle) protein is Tenecin-1.